The primary structure comprises 632 residues: Tetratricopeptide repeat protein 39B (632 aa).

TPR repeat units lie at residues 343–376, 535–568, and 576–609; these read SLVL…QEEW, CLVK…EKLL, and PFTL…YKDY.

Belongs to the TTC39 family.

Regulates high density lipoprotein (HDL) cholesterol metabolism by promoting the ubiquitination and degradation of the oxysterols receptors LXR (NR1H2 and NR1H3). The polypeptide is Tetratricopeptide repeat protein 39B (TTC39B) (Macaca fascicularis (Crab-eating macaque)).